The sequence spans 190 residues: Putative acetyltransferase DDB_G0275913 (190 aa).

This sequence belongs to the transferase hexapeptide repeat family.

This chain is Putative acetyltransferase DDB_G0275913, found in Dictyostelium discoideum (Social amoeba).